Here is a 318-residue protein sequence, read N- to C-terminus: uncharacterized protein (318 aa).

This is an uncharacterized protein from Orgyia pseudotsugata multicapsid polyhedrosis virus (OpMNPV).